Here is a 196-residue protein sequence, read N- to C-terminus: Ribosome maturation factor RimP (196 aa).

Residues Leu-164 to Glu-196 form a disordered region. Basic residues predominate over residues Gly-173 to Lys-182.

Belongs to the RimP family.

It is found in the cytoplasm. Functionally, required for maturation of 30S ribosomal subunits. The chain is Ribosome maturation factor RimP from Xanthomonas oryzae pv. oryzae (strain MAFF 311018).